The primary structure comprises 272 residues: 2-dehydro-3-deoxyphosphooctonate aldolase (272 aa).

It belongs to the KdsA family.

It localises to the cytoplasm. It carries out the reaction D-arabinose 5-phosphate + phosphoenolpyruvate + H2O = 3-deoxy-alpha-D-manno-2-octulosonate-8-phosphate + phosphate. It participates in carbohydrate biosynthesis; 3-deoxy-D-manno-octulosonate biosynthesis; 3-deoxy-D-manno-octulosonate from D-ribulose 5-phosphate: step 2/3. It functions in the pathway bacterial outer membrane biogenesis; lipopolysaccharide biosynthesis. This chain is 2-dehydro-3-deoxyphosphooctonate aldolase, found in Geotalea daltonii (strain DSM 22248 / JCM 15807 / FRC-32) (Geobacter daltonii).